Here is a 186-residue protein sequence, read N- to C-terminus: Protein FAM9B (186 aa).

The tract at residues Met1–Lys93 is disordered. Basic and acidic residues-rich tracts occupy residues Gly10–Thr27 and Asp34–Asp58. Residues Lys66–Lys93 show a composition bias toward basic residues.

Belongs to the XLR/SYCP3 family. In terms of tissue distribution, expressed in testis and ovary (at protein level).

The protein localises to the nucleus. It is found in the cytoplasm. It localises to the chromosome. In terms of biological role, may play a role in meiosis. This Homo sapiens (Human) protein is Protein FAM9B.